The following is a 325-amino-acid chain: GMP reductase (325 aa).

Residue Cys-174 is the Thioimidate intermediate of the active site. 203–226 (IIADGGIRTHGDIAKSVRFGATMV) is an NADP(+) binding site.

This sequence belongs to the IMPDH/GMPR family. GuaC type 2 subfamily.

The catalysed reaction is IMP + NH4(+) + NADP(+) = GMP + NADPH + 2 H(+). In terms of biological role, catalyzes the irreversible NADPH-dependent deamination of GMP to IMP. It functions in the conversion of nucleobase, nucleoside and nucleotide derivatives of G to A nucleotides, and in maintaining the intracellular balance of A and G nucleotides. In Enterococcus faecalis (strain ATCC 700802 / V583), this protein is GMP reductase.